Consider the following 458-residue polypeptide: Delta(8)-fatty-acid desaturase (458 aa).

In terms of domain architecture, Cytochrome b5 heme-binding spans 16–100 (KKYITSKELK…LKDYQVSDIS (85 aa)). Histidine 51 and histidine 74 together coordinate heme. 2 helical membrane-spanning segments follow: residues 122 to 142 (GVIY…YGVL) and 147 to 167 (FWIH…IAYL). The short motif at 169–173 (HDAGH) is the Histidine box-1 element. The chain crosses the membrane as a helical span at residues 185-205 (FAGIFIGNCITGISIAWWKWT). The Histidine box-2 motif lies at 206-210 (HNAHH). The next 3 helical transmembrane spans lie at 264 to 284 (YYPI…LLLI), 293 to 313 (GLNI…VSRL), and 320 to 340 (VAFV…FTLN). A Histidine box-3 motif is present at residues 383–387 (QLEHH).

The protein belongs to the fatty acid desaturase type 1 family. It depends on Fe cation as a cofactor.

It localises to the membrane. It catalyses the reaction an N-acyl-(4R)-4-hydroxysphinganine + 2 Fe(II)-[cytochrome b5] + O2 + 2 H(+) = a (4R,8E)-4-hydroxysphingenine ceramide + 2 Fe(III)-[cytochrome b5] + 2 H2O. It carries out the reaction an N-acyl-(4R)-4-hydroxysphinganine + 2 Fe(II)-[cytochrome b5] + O2 + 2 H(+) = a (4R,8Z)-4-hydroxysphing-8-enine ceramide + 2 Fe(III)-[cytochrome b5] + 2 H2O. In terms of biological role, plays a major role as delta(8)-fatty-acid desaturase which introduces a double bond at the 8-position in the long-chain base (LCB) of ceramides with or without a hydroxy group at the 4-position. The enzyme produces both the 8E and 8Z isomers. This structural modification contributes to the quantitative partitioning of ceramides between the two major sphingolipid classes, glucosylceramides and glycosylinositolphosphoryl ceramides. Sphingolipids are important membrane components involved in environmental stress responses, such as resistance to chilling, and act as cell signaling molecules. The sequence is that of Delta(8)-fatty-acid desaturase (sld1) from Helianthus annuus (Common sunflower).